The primary structure comprises 279 residues: MIKLLVSFTILFVLSSARPQEIDSNQAAIANTEANEAPVIVNNDASMGNAVDFSFPTNVQVMNCLKKAKYQVVFLRGFVPTGNGAFDSNCVGNIRNAYSAGLGIETYMTPQPISSWQGYQQLDLLYNGLNNNGITIRSVWIQVTSPANWPNNPTANVNFINSIISRAQQYGLSVGIYTNQYDWSQITGNSANINSNVMLWYWNVLGGGTSGETKPTFADFRAFGPFKKASVKQYAQVETVCNLVVNRDVYAVGIPAAAPKTEVNMADGEKIVVGGFVGN.

A signal peptide spans 1–19 (MIKLLVSFTILFVLSSARP). One can recognise a Ch-type lysozyme domain in the interval 47–265 (MGNAVDFSFP…AAAPKTEVNM (219 aa)).

This sequence belongs to the glycosyl hydrolase 25 family. As to expression, expressed in intestine.

Functionally, involved in resistance to Gram-positive bacteria P.aeruginosa or B.thuringiensis infection. In Caenorhabditis elegans, this protein is Lysozyme-like protein 2.